A 251-amino-acid polypeptide reads, in one-letter code: Zinc import ATP-binding protein ZnuC (251 aa).

An ABC transporter domain is found at 5-220 (VSLENVSVSF…PEFISMFGPR (216 aa)). An ATP-binding site is contributed by 37–44 (GPNGAGKS).

The protein belongs to the ABC transporter superfamily. Zinc importer (TC 3.A.1.15.5) family. In terms of assembly, the complex is composed of two ATP-binding proteins (ZnuC), two transmembrane proteins (ZnuB) and a solute-binding protein (ZnuA).

The protein localises to the cell inner membrane. The enzyme catalyses Zn(2+)(out) + ATP(in) + H2O(in) = Zn(2+)(in) + ADP(in) + phosphate(in) + H(+)(in). Its function is as follows. Part of the ABC transporter complex ZnuABC involved in zinc import. Responsible for energy coupling to the transport system. The sequence is that of Zinc import ATP-binding protein ZnuC from Shigella dysenteriae serotype 1 (strain Sd197).